The primary structure comprises 619 residues: 1-deoxy-D-xylulose-5-phosphate synthase (619 aa).

Residues histidine 74 and 115-117 each bind thiamine diphosphate; that span reads GHS. Position 146 (aspartate 146) interacts with Mg(2+). Residues 147–148, asparagine 175, tyrosine 285, and glutamate 365 each bind thiamine diphosphate; that span reads GA. Asparagine 175 provides a ligand contact to Mg(2+).

Belongs to the transketolase family. DXPS subfamily. Homodimer. It depends on Mg(2+) as a cofactor. Thiamine diphosphate is required as a cofactor.

It catalyses the reaction D-glyceraldehyde 3-phosphate + pyruvate + H(+) = 1-deoxy-D-xylulose 5-phosphate + CO2. The protein operates within metabolic intermediate biosynthesis; 1-deoxy-D-xylulose 5-phosphate biosynthesis; 1-deoxy-D-xylulose 5-phosphate from D-glyceraldehyde 3-phosphate and pyruvate: step 1/1. In terms of biological role, catalyzes the acyloin condensation reaction between C atoms 2 and 3 of pyruvate and glyceraldehyde 3-phosphate to yield 1-deoxy-D-xylulose-5-phosphate (DXP). The protein is 1-deoxy-D-xylulose-5-phosphate synthase of Clostridium perfringens (strain SM101 / Type A).